Here is a 953-residue protein sequence, read N- to C-terminus: 26S proteasome non-ATPase regulatory subunit 1 (953 aa).

Methionine 1 is modified (N-acetylmethionine). The residue at position 273 (threonine 273) is a Phosphothreonine. A disordered region spans residues 277-319 (SVPGSTNTGTVPGPEKDSDSMETEEKTAGAVAGKTPDASPEPK). The span at 290–303 (PEKDSDSMETEEKT) shows a compositional bias: basic and acidic residues. Lysine 310 is modified (N6-acetyllysine). The residue at position 311 (threonine 311) is a Phosphothreonine. Serine 315 is subject to Phosphoserine. PC repeat units follow at residues 403 to 436 (TATA…PGSA), 441 to 474 (GGLY…DIVR), 476 to 510 (GGSL…VTGE), 511 to 545 (AAGL…EKIL), 547 to 580 (GLAV…ILRR), 581 to 616 (SGMY…DVRR), 617 to 649 (AAVE…PHVR), 651 to 685 (GAAM…YVRQ), 686 to 726 (GALI…DVMA), and 729 to 761 (GAIL…PSVV). N6-acetyllysine is present on lysine 720. Residue threonine 830 is modified to Phosphothreonine. At serine 834 the chain carries Phosphoserine. 2 disordered regions span residues 839 to 881 (AKKK…LDNP) and 930 to 953 (AHGP…YIDD). Basic and acidic residues-rich tracts occupy residues 842-852 (KEKEKEKKEEE) and 859-872 (AEKK…KEPE). Positions 936-953 (EEEEQEPEPPEPFEYIDD) are enriched in acidic residues.

The protein belongs to the proteasome subunit S1 family. As to quaternary structure, component of the 19S proteasome regulatory particle complex. The 26S proteasome consists of a 20S core particle (CP) and two 19S regulatory subunits (RP). The regulatory particle is made of a lid composed of 9 subunits, a base containing 6 ATPases and few additional components including PSMD1. Interacts with ADRM1. Interacts with ZFAND1.

Functionally, component of the 26S proteasome, a multiprotein complex involved in the ATP-dependent degradation of ubiquitinated proteins. This complex plays a key role in the maintenance of protein homeostasis by removing misfolded or damaged proteins, which could impair cellular functions, and by removing proteins whose functions are no longer required. Therefore, the proteasome participates in numerous cellular processes, including cell cycle progression, apoptosis, or DNA damage repair. This Rattus norvegicus (Rat) protein is 26S proteasome non-ATPase regulatory subunit 1 (Psmd1).